We begin with the raw amino-acid sequence, 192 residues long: UPF0149 protein Spro_3920 (192 aa).

This sequence belongs to the UPF0149 family.

In Serratia proteamaculans (strain 568), this protein is UPF0149 protein Spro_3920.